The primary structure comprises 625 residues: 1-deoxy-D-xylulose-5-phosphate synthase (625 aa).

Thiamine diphosphate-binding positions include His84 and 125–127 (GHS). A Mg(2+)-binding site is contributed by Asp156. Residues 157-158 (GA), Asn185, Phe292, and Glu373 each bind thiamine diphosphate. Asn185 provides a ligand contact to Mg(2+).

The protein belongs to the transketolase family. DXPS subfamily. Homodimer. Mg(2+) serves as cofactor. The cofactor is thiamine diphosphate.

It catalyses the reaction D-glyceraldehyde 3-phosphate + pyruvate + H(+) = 1-deoxy-D-xylulose 5-phosphate + CO2. It participates in metabolic intermediate biosynthesis; 1-deoxy-D-xylulose 5-phosphate biosynthesis; 1-deoxy-D-xylulose 5-phosphate from D-glyceraldehyde 3-phosphate and pyruvate: step 1/1. Catalyzes the acyloin condensation reaction between C atoms 2 and 3 of pyruvate and glyceraldehyde 3-phosphate to yield 1-deoxy-D-xylulose-5-phosphate (DXP). In Marinomonas sp. (strain MWYL1), this protein is 1-deoxy-D-xylulose-5-phosphate synthase.